Here is a 126-residue protein sequence, read N- to C-terminus: Large ribosomal subunit protein bL12 (126 aa).

It belongs to the bacterial ribosomal protein bL12 family. As to quaternary structure, homodimer. Part of the ribosomal stalk of the 50S ribosomal subunit. Forms a multimeric L10(L12)X complex, where L10 forms an elongated spine to which 2 to 4 L12 dimers bind in a sequential fashion. Binds GTP-bound translation factors.

Forms part of the ribosomal stalk which helps the ribosome interact with GTP-bound translation factors. Is thus essential for accurate translation. The polypeptide is Large ribosomal subunit protein bL12 (Helicobacter hepaticus (strain ATCC 51449 / 3B1)).